Consider the following 865-residue polypeptide: High affinity cAMP-specific and IBMX-insensitive 3',5'-cyclic phosphodiesterase 8B (865 aa).

Disordered stretches follow at residues 17–40 and 52–92; these read CRDS…TAPL and AMPP…TCRG. A compositionally biased stretch (polar residues) spans 23-36; the sequence is SNSPRQTSSVSQGP. Residues 75-90 show a composition bias toward low complexity; sequence GSGSSTGSSGPATTTC. Residues 247-318 enclose the PAS domain; that stretch reads ACNSVFTALD…DTINTCIKKG (72 aa). The interval 373-415 is disordered; that stretch reads IHRDSGDNSQTEPHSFRHKSRRKESIDVKSISSRGSDAPSLQN. Polar residues predominate over residues 402–415; it reads SISSRGSDAPSLQN. S497 is subject to Phosphoserine. Residues 519–855 form the PDEase domain; sequence TINDVPPSIA…KHWKTLDDLK (337 aa). Residue H595 is the Proton donor of the active site. Residues H599, H635, and D636 each coordinate a divalent metal cation. A phosphoserine mark is found at S731 and S734. An a divalent metal cation-binding site is contributed by D761.

Belongs to the cyclic nucleotide phosphodiesterase family. PDE8 subfamily. Requires a divalent metal cation as cofactor. As to expression, widely expressed.

The catalysed reaction is 3',5'-cyclic AMP + H2O = AMP + H(+). Its pathway is purine metabolism; 3',5'-cyclic AMP degradation; AMP from 3',5'-cyclic AMP: step 1/1. Functionally, hydrolyzes the second messenger cAMP, which is a key regulator of many important physiological processes. May be involved in specific signaling in the thyroid gland. The protein is High affinity cAMP-specific and IBMX-insensitive 3',5'-cyclic phosphodiesterase 8B (Pde8b) of Mus musculus (Mouse).